The following is a 247-amino-acid chain: MKILISNDDGYQAPGIVQLAQSLTQEHEIIVVAPSENKSASSSSLTFDNPLRPIQISNNVYKIDATPSDCVHLALCGFLNEKIDLVVTGINFGANLGDDVIYSGTVAGAIEGRFLGLPSVAISLASWKGQHFETAGIIAKQLINQISHTQLSHDTVLNVNVPDVSLNYIKGFQTTRLGKRHMSEQSVADKDDPTLYWIGENGKEADNGVGTDFHAIANYYVSVTPLQIDLTKYNEIDTVSKWLNQIK.

Residues aspartate 8, aspartate 9, serine 39, and asparagine 91 each contribute to the a divalent metal cation site.

It belongs to the SurE nucleotidase family. A divalent metal cation serves as cofactor.

The protein resides in the cytoplasm. It catalyses the reaction a ribonucleoside 5'-phosphate + H2O = a ribonucleoside + phosphate. In terms of biological role, nucleotidase that shows phosphatase activity on nucleoside 5'-monophosphates. The chain is 5'-nucleotidase SurE from Ruthia magnifica subsp. Calyptogena magnifica.